Here is a 429-residue protein sequence, read N- to C-terminus: Mannose-6-phosphate isomerase (429 aa).

The Zn(2+) site is built by Gln110, His112, Glu137, and His282. The active site involves Arg301.

The protein belongs to the mannose-6-phosphate isomerase type 1 family. Zn(2+) is required as a cofactor.

Its subcellular location is the cytoplasm. The enzyme catalyses D-mannose 6-phosphate = D-fructose 6-phosphate. It functions in the pathway nucleotide-sugar biosynthesis; GDP-alpha-D-mannose biosynthesis; alpha-D-mannose 1-phosphate from D-fructose 6-phosphate: step 1/2. Functionally, involved in the synthesis of the GDP-mannose and dolichol-phosphate-mannose required for a number of critical mannosyl transfer reactions. The chain is Mannose-6-phosphate isomerase (PMI1) from Candida glabrata (strain ATCC 2001 / BCRC 20586 / JCM 3761 / NBRC 0622 / NRRL Y-65 / CBS 138) (Yeast).